The following is a 262-amino-acid chain: Thiazole synthase (262 aa).

The Schiff-base intermediate with DXP role is filled by Lys97. 1-deoxy-D-xylulose 5-phosphate is bound by residues Gly158, 185 to 186, and 207 to 208; these read AG and NT. The disordered stretch occupies residues 243-262; sequence DKAQASTPTVGQPFWHSAEY.

Belongs to the ThiG family. Homotetramer. Forms heterodimers with either ThiH or ThiS.

It is found in the cytoplasm. The enzyme catalyses [ThiS sulfur-carrier protein]-C-terminal-Gly-aminoethanethioate + 2-iminoacetate + 1-deoxy-D-xylulose 5-phosphate = [ThiS sulfur-carrier protein]-C-terminal Gly-Gly + 2-[(2R,5Z)-2-carboxy-4-methylthiazol-5(2H)-ylidene]ethyl phosphate + 2 H2O + H(+). The protein operates within cofactor biosynthesis; thiamine diphosphate biosynthesis. In terms of biological role, catalyzes the rearrangement of 1-deoxy-D-xylulose 5-phosphate (DXP) to produce the thiazole phosphate moiety of thiamine. Sulfur is provided by the thiocarboxylate moiety of the carrier protein ThiS. In vitro, sulfur can be provided by H(2)S. The protein is Thiazole synthase of Neisseria meningitidis serogroup C (strain 053442).